The following is a 265-amino-acid chain: Beta-lactamase OXA-48 (265 aa).

Positions 1-22 (MRVLALSAVFLVASIIGMPAVA) are cleaved as a signal peptide. Residue Ser70 is the Acyl-ester intermediate of the active site. Positions 70, 73, 118, and 250 each coordinate a beta-lactam. Lys73 is modified (N6-carboxylysine).

The protein belongs to the class-D beta-lactamase family. In terms of assembly, monomer. Dimer. Carboxylated on the epsilon-amino group of a lysine, with the resulting carbamate functional group serving as a general base. Probably N-carboxylated at Lys-73 at neutral pH in vivo and undergoes complete N-decarboxylation, at pH 4.1, in vitro.

It carries out the reaction a beta-lactam + H2O = a substituted beta-amino acid. With respect to regulation, inhibited by avibactam, related diazabicyclooctane (DBO) derivatives and by bicyclic boronic acids, via a covalent binding to Ser-70. Inhibited by chloride, bromide and iodide ions. Not inhibited by the beta-lactamase-blocking agents, clavulanic acid or tazobactam. Class D beta-lactamase which confers resistance to the beta-lactam antibiotics, including amoxicillin, and moderate resistance to cephalosporins and carbapenems such as cephalothin and imipenem; in the DH10B strain of E.coli. Acts via hydrolysis of the beta-lactam ring. Has oxacillin-, cephalothin- and imipenem-hydrolyzing activities. The sequence is that of Beta-lactamase OXA-48 from Klebsiella pneumoniae.